A 195-amino-acid polypeptide reads, in one-letter code: Imidazoleglycerol-phosphate dehydratase (195 aa).

The protein belongs to the imidazoleglycerol-phosphate dehydratase family.

The protein localises to the cytoplasm. The enzyme catalyses D-erythro-1-(imidazol-4-yl)glycerol 3-phosphate = 3-(imidazol-4-yl)-2-oxopropyl phosphate + H2O. Its pathway is amino-acid biosynthesis; L-histidine biosynthesis; L-histidine from 5-phospho-alpha-D-ribose 1-diphosphate: step 6/9. The polypeptide is Imidazoleglycerol-phosphate dehydratase (Bacillus cytotoxicus (strain DSM 22905 / CIP 110041 / 391-98 / NVH 391-98)).